A 351-amino-acid polypeptide reads, in one-letter code: Signal recognition particle receptor FtsY (351 aa).

GTP-binding positions include 156–163 (GINGTGKT), 238–242 (DTAGR), and 302–305 (TKLD).

Belongs to the GTP-binding SRP family. FtsY subfamily. In terms of assembly, part of the signal recognition particle protein translocation system, which is composed of SRP and FtsY. SRP is a ribonucleoprotein composed of Ffh and a 4.5S RNA molecule.

Its subcellular location is the cell membrane. It localises to the cytoplasm. It catalyses the reaction GTP + H2O = GDP + phosphate + H(+). Its function is as follows. Involved in targeting and insertion of nascent membrane proteins into the cytoplasmic membrane. Acts as a receptor for the complex formed by the signal recognition particle (SRP) and the ribosome-nascent chain (RNC). Interaction with SRP-RNC leads to the transfer of the RNC complex to the Sec translocase for insertion into the membrane, the hydrolysis of GTP by both Ffh and FtsY, and the dissociation of the SRP-FtsY complex into the individual components. This chain is Signal recognition particle receptor FtsY, found in Buchnera aphidicola subsp. Schizaphis graminum (strain Sg).